A 175-amino-acid chain; its full sequence is ATP synthase subunit b (175 aa).

A helical transmembrane segment spans residues 19–39; it reads LVVGTIAFALLVFVLLKFVMP.

This sequence belongs to the ATPase B chain family. F-type ATPases have 2 components, F(1) - the catalytic core - and F(0) - the membrane proton channel. F(1) has five subunits: alpha(3), beta(3), gamma(1), delta(1), epsilon(1). F(0) has three main subunits: a(1), b(2) and c(10-14). The alpha and beta chains form an alternating ring which encloses part of the gamma chain. F(1) is attached to F(0) by a central stalk formed by the gamma and epsilon chains, while a peripheral stalk is formed by the delta and b chains.

Its subcellular location is the cell membrane. F(1)F(0) ATP synthase produces ATP from ADP in the presence of a proton or sodium gradient. F-type ATPases consist of two structural domains, F(1) containing the extramembraneous catalytic core and F(0) containing the membrane proton channel, linked together by a central stalk and a peripheral stalk. During catalysis, ATP synthesis in the catalytic domain of F(1) is coupled via a rotary mechanism of the central stalk subunits to proton translocation. Its function is as follows. Component of the F(0) channel, it forms part of the peripheral stalk, linking F(1) to F(0). This is ATP synthase subunit b from Salinispora tropica (strain ATCC BAA-916 / DSM 44818 / JCM 13857 / NBRC 105044 / CNB-440).